A 249-amino-acid chain; its full sequence is Chromosome-partitioning ATPase Soj (249 aa).

Lysine 15, glycine 16, glycine 17, valine 18, glycine 19, lysine 20, threonine 21, threonine 22, proline 207, and asparagine 209 together coordinate ATP. ADP is bound at residue glycine 17. ADP is bound by residues glycine 19, lysine 20, threonine 21, threonine 22, proline 207, and asparagine 209. Threonine 21 contacts Mg(2+).

The protein belongs to the ParA family. Monomer in the absence of nucleotides or presence of ADP, in the presence of ATP is found in a monomer-dimer equilibrium. ATP-binding is required for DNA-binding. Probably interacts with Spo0J.

It catalyses the reaction ATP + H2O = ADP + phosphate + H(+). With respect to regulation, ATPase activity is stimulated 10-fold in the presence of Spo0J and parS DNA (a plasmid centromere-like site or plasmid DNA itself). The first 20 residues of Spo0J stimulate its ATPase activity by 8%. ATPase probably involved in chromosome partitioning. Cooperatively binds dsDNA, forming nucleoprotein filaments in a strictly ATP-dependent fashion. Can also bind ssDNA with lower affinity. This chain is Chromosome-partitioning ATPase Soj, found in Thermus thermophilus (strain ATCC BAA-163 / DSM 7039 / HB27).